The sequence spans 127 residues: Probable glycine cleavage system H protein (127 aa).

The Lipoyl-binding domain occupies 24–106 (TAEVGITAFA…FGDGWMLTVE (83 aa)). Lysine 65 is modified (N6-lipoyllysine).

This sequence belongs to the GcvH family. As to quaternary structure, the glycine cleavage system is composed of four proteins: P, T, L and H. It depends on (R)-lipoate as a cofactor.

Its function is as follows. The glycine cleavage system catalyzes the degradation of glycine. The H protein shuttles the methylamine group of glycine from the P protein to the T protein. In Haloarcula marismortui (strain ATCC 43049 / DSM 3752 / JCM 8966 / VKM B-1809) (Halobacterium marismortui), this protein is Probable glycine cleavage system H protein.